The primary structure comprises 232 residues: Putative dimethylsulfoniopropionate lyase DddL (232 aa).

Positions 154, 159, 161, and 190 each coordinate a divalent metal cation.

It belongs to the non-heme iron-dependent dioxygenase family. In terms of assembly, homodimer. It depends on a divalent metal cation as a cofactor.

It carries out the reaction S,S-dimethyl-beta-propiothetin = acrylate + dimethyl sulfide + H(+). In terms of biological role, may cleave dimethylsulfoniopropionate (DMSP), releasing dimethyl sulfide (DMS). DMS is the principal form by which sulfur is transported from oceans to the atmosphere. The real activity of the protein is however subject to debate and it is unclear whether it constitutes a real dimethylsulfoniopropionate lyase in vivo. This is Putative dimethylsulfoniopropionate lyase DddL (dddL) from Cereibacter sphaeroides (strain ATCC 17023 / DSM 158 / JCM 6121 / CCUG 31486 / LMG 2827 / NBRC 12203 / NCIMB 8253 / ATH 2.4.1.) (Rhodobacter sphaeroides).